A 633-amino-acid chain; its full sequence is Probable alkaline/neutral invertase A, chloroplastic (633 aa).

Residues 1–71 constitute a chloroplast transit peptide; sequence MNAITFLGNS…TNAVPFCTDR (71 aa). Residue Ser623 is modified to Phosphoserine.

It belongs to the glycosyl hydrolase 100 family. In terms of tissue distribution, expressed in flowers.

It localises to the plastid. The protein localises to the chloroplast. The catalysed reaction is Hydrolysis of terminal non-reducing beta-D-fructofuranoside residues in beta-D-fructofuranosides.. Functionally, chloroplastic invertase that cleaves sucrose into glucose and fructose and may participate in the carbon flux between the cytosol and plastids in leaves. In Arabidopsis thaliana (Mouse-ear cress), this protein is Probable alkaline/neutral invertase A, chloroplastic.